The primary structure comprises 238 residues: Hydroxyacylglutathione hydrolase (238 aa).

Zn(2+)-binding residues include histidine 52, histidine 54, aspartate 56, histidine 57, histidine 108, aspartate 125, and histidine 163.

It belongs to the metallo-beta-lactamase superfamily. Glyoxalase II family. Monomer. Zn(2+) is required as a cofactor.

It catalyses the reaction an S-(2-hydroxyacyl)glutathione + H2O = a 2-hydroxy carboxylate + glutathione + H(+). Its pathway is secondary metabolite metabolism; methylglyoxal degradation; (R)-lactate from methylglyoxal: step 2/2. In terms of biological role, thiolesterase that catalyzes the hydrolysis of S-D-lactoyl-glutathione to form glutathione and D-lactic acid. This is Hydroxyacylglutathione hydrolase from Haemophilus influenzae (strain ATCC 51907 / DSM 11121 / KW20 / Rd).